The chain runs to 312 residues: Oxidoreductase NAD-binding domain-containing protein 1 (312 aa).

The first 17 residues, 1–17 (MACAAVMIPGLLRCSVG), serve as a signal peptide directing secretion. Positions 50-186 (HMERTASVLR…GGVGINPLLS (137 aa)) constitute an FAD-binding FR-type domain. Residue 178–183 (GVGINP) coordinates NAD(+).

This chain is Oxidoreductase NAD-binding domain-containing protein 1 (OXNAD1), found in Homo sapiens (Human).